Reading from the N-terminus, the 158-residue chain is Endoribonuclease YbeY (158 aa).

His-120, His-124, and His-130 together coordinate Zn(2+).

Belongs to the endoribonuclease YbeY family. Zn(2+) is required as a cofactor.

The protein resides in the cytoplasm. Single strand-specific metallo-endoribonuclease involved in late-stage 70S ribosome quality control and in maturation of the 3' terminus of the 16S rRNA. The chain is Endoribonuclease YbeY from Spiroplasma citri.